The following is a 105-amino-acid chain: Small ribosomal subunit protein uS10 (105 aa).

This sequence belongs to the universal ribosomal protein uS10 family. In terms of assembly, part of the 30S ribosomal subunit.

In terms of biological role, involved in the binding of tRNA to the ribosomes. The sequence is that of Small ribosomal subunit protein uS10 from Maridesulfovibrio salexigens (strain ATCC 14822 / DSM 2638 / NCIMB 8403 / VKM B-1763) (Desulfovibrio salexigens).